The chain runs to 341 residues: UDP-3-O-acylglucosamine N-acyltransferase (341 aa).

The active-site Proton acceptor is the histidine 239.

The protein belongs to the transferase hexapeptide repeat family. LpxD subfamily. In terms of assembly, homotrimer.

It carries out the reaction a UDP-3-O-[(3R)-3-hydroxyacyl]-alpha-D-glucosamine + a (3R)-hydroxyacyl-[ACP] = a UDP-2-N,3-O-bis[(3R)-3-hydroxyacyl]-alpha-D-glucosamine + holo-[ACP] + H(+). The protein operates within bacterial outer membrane biogenesis; LPS lipid A biosynthesis. In terms of biological role, catalyzes the N-acylation of UDP-3-O-acylglucosamine using 3-hydroxyacyl-ACP as the acyl donor. Is involved in the biosynthesis of lipid A, a phosphorylated glycolipid that anchors the lipopolysaccharide to the outer membrane of the cell. The polypeptide is UDP-3-O-acylglucosamine N-acyltransferase (Shewanella sp. (strain MR-7)).